Here is a 362-residue protein sequence, read N- to C-terminus: Ferredoxin--NADP reductase, leaf isozyme 1, chloroplastic (362 aa).

A chloroplast-targeting transit peptide spans methionine 1–alanine 62. One can recognise an FAD-binding FR-type domain in the interval lysine 83–methionine 205. Residues arginine 141 to serine 144, cysteine 162 to lysine 164, tyrosine 168, valine 179 to serine 181, and threonine 220 contribute to the FAD site. 2 residues coordinate NADP(+): serine 144 and lysine 164. Cysteines 180 and 185 form a disulfide. Serine 181 carries the phosphoserine modification. NADP(+) contacts are provided by residues threonine 220, valine 252–proline 253, serine 282–arginine 283, lysine 292, glycine 321–leucine 322, and glutamate 360.

This sequence belongs to the ferredoxin--NADP reductase type 1 family. Component of high molecular weight thylakoid LFNRs-containing protein complexes containing LIR1, LFNR1, LFNR2, TIC62 and TROL proteins. Interacts directly with LIR1 and TIC62; LIR1 increases the affinity of LFNR1 and LFNR2 for TIC62. Requires FAD as cofactor. Post-translationally, may form interchain disulfide bonds with LIR1.

Its subcellular location is the plastid. The protein resides in the chloroplast stroma. It is found in the chloroplast thylakoid membrane. The catalysed reaction is 2 reduced [2Fe-2S]-[ferredoxin] + NADP(+) + H(+) = 2 oxidized [2Fe-2S]-[ferredoxin] + NADPH. It participates in energy metabolism; photosynthesis. In terms of biological role, may play a key role in regulating the relative amounts of cyclic and non-cyclic electron flow to meet the demands of the plant for ATP and reducing power. The sequence is that of Ferredoxin--NADP reductase, leaf isozyme 1, chloroplastic from Oryza sativa subsp. japonica (Rice).